The primary structure comprises 400 residues: Phosphoglycerate kinase (400 aa).

Substrate contacts are provided by residues 24 to 26 (DFN), arginine 40, 63 to 66 (HFGR), arginine 121, and arginine 154. ATP is bound by residues lysine 205, glycine 296, glutamate 327, and 356 to 359 (GGDS).

It belongs to the phosphoglycerate kinase family. As to quaternary structure, monomer.

The protein resides in the cytoplasm. It carries out the reaction (2R)-3-phosphoglycerate + ATP = (2R)-3-phospho-glyceroyl phosphate + ADP. It participates in carbohydrate degradation; glycolysis; pyruvate from D-glyceraldehyde 3-phosphate: step 2/5. The chain is Phosphoglycerate kinase from Thermosynechococcus vestitus (strain NIES-2133 / IAM M-273 / BP-1).